The chain runs to 253 residues: Tetraspanin-11 (253 aa).

Transmembrane regions (helical) follow at residues 19–39, 63–83, 90–110, and 220–240; these read LLFI…AVGV, ILIF…GAVI, LSAY…AGVL, and LLLM…GMIL.

The protein belongs to the tetraspanin (TM4SF) family.

The protein resides in the membrane. This is Tetraspanin-11 (TSPAN11) from Bos taurus (Bovine).